Consider the following 204-residue polypeptide: Large ribosomal subunit protein uL4 (204 aa).

A disordered region spans residues 53–77 (ISDVSGTTAKPYSQKRTGRARQGSL). The span at 56–67 (VSGTTAKPYSQK) shows a compositional bias: polar residues.

It belongs to the universal ribosomal protein uL4 family. Part of the 50S ribosomal subunit.

In terms of biological role, one of the primary rRNA binding proteins, this protein initially binds near the 5'-end of the 23S rRNA. It is important during the early stages of 50S assembly. It makes multiple contacts with different domains of the 23S rRNA in the assembled 50S subunit and ribosome. Functionally, forms part of the polypeptide exit tunnel. The protein is Large ribosomal subunit protein uL4 of Wolbachia sp. subsp. Brugia malayi (strain TRS).